Reading from the N-terminus, the 296-residue chain is Protoheme IX farnesyltransferase (296 aa).

Transmembrane regions (helical) follow at residues 9–29, 36–56, 75–95, 99–119, 133–153, 163–183, 209–229, 234–254, and 265–285; these read VTKP…FLLA, YPLF…GCVF, VLVK…VLGI, LLLY…GFVI, VYGT…GYCA, LILL…IAIF, ITLY…SGYA, LVVA…GYKA, and FVFS…DFNV.

Belongs to the UbiA prenyltransferase family. Protoheme IX farnesyltransferase subfamily.

It localises to the cell inner membrane. The catalysed reaction is heme b + (2E,6E)-farnesyl diphosphate + H2O = Fe(II)-heme o + diphosphate. Its pathway is porphyrin-containing compound metabolism; heme O biosynthesis; heme O from protoheme: step 1/1. Its function is as follows. Converts heme B (protoheme IX) to heme O by substitution of the vinyl group on carbon 2 of heme B porphyrin ring with a hydroxyethyl farnesyl side group. This is Protoheme IX farnesyltransferase from Yersinia pestis bv. Antiqua (strain Antiqua).